We begin with the raw amino-acid sequence, 540 residues long: Peptide chain release factor 3 (540 aa).

Positions 14–283 (NQRRNFAIIS…AFLDYALKPI (270 aa)) constitute a tr-type G domain. GTP is bound by residues 23 to 30 (SHPDAGKT), 91 to 95 (DTPGH), and 145 to 148 (NKLD).

It belongs to the TRAFAC class translation factor GTPase superfamily. Classic translation factor GTPase family. PrfC subfamily.

The protein localises to the cytoplasm. Functionally, increases the formation of ribosomal termination complexes and stimulates activities of RF-1 and RF-2. It binds guanine nucleotides and has strong preference for UGA stop codons. It may interact directly with the ribosome. The stimulation of RF-1 and RF-2 is significantly reduced by GTP and GDP, but not by GMP. The protein is Peptide chain release factor 3 of Gloeothece citriformis (strain PCC 7424) (Cyanothece sp. (strain PCC 7424)).